The following is a 97-amino-acid chain: RNA-binding protein Hfq (97 aa).

The region spanning Asp-10 to Val-70 is the Sm domain. The disordered stretch occupies residues Glu-75 to Glu-97. The span at Thr-85–Glu-97 shows a compositional bias: polar residues.

It belongs to the Hfq family. As to quaternary structure, homohexamer.

In terms of biological role, RNA chaperone that binds small regulatory RNA (sRNAs) and mRNAs to facilitate mRNA translational regulation in response to envelope stress, environmental stress and changes in metabolite concentrations. Also binds with high specificity to tRNAs. The protein is RNA-binding protein Hfq of Neisseria meningitidis serogroup C / serotype 2a (strain ATCC 700532 / DSM 15464 / FAM18).